A 429-amino-acid polypeptide reads, in one-letter code: Tryptophan synthase beta chain 2 (429 aa).

Residues 18–40 are disordered; sequence NINPDLPSPLPEPKNPEGGKNIE. Lysine 110 carries the N6-(pyridoxal phosphate)lysine modification.

Belongs to the TrpB family. As to quaternary structure, tetramer of two alpha and two beta chains. It depends on pyridoxal 5'-phosphate as a cofactor.

It carries out the reaction (1S,2R)-1-C-(indol-3-yl)glycerol 3-phosphate + L-serine = D-glyceraldehyde 3-phosphate + L-tryptophan + H2O. The protein operates within amino-acid biosynthesis; L-tryptophan biosynthesis; L-tryptophan from chorismate: step 5/5. In terms of biological role, the beta subunit is responsible for the synthesis of L-tryptophan from indole and L-serine. This Methanothermobacter thermautotrophicus (strain ATCC 29096 / DSM 1053 / JCM 10044 / NBRC 100330 / Delta H) (Methanobacterium thermoautotrophicum) protein is Tryptophan synthase beta chain 2 (trpB2).